A 329-amino-acid chain; its full sequence is GTP 3',8-cyclase (329 aa).

A Radical SAM core domain is found at 8–234 (AFARKFFYLR…QIRQRSDGPA (227 aa)). Residue R17 participates in GTP binding. Residues C24 and C28 each contribute to the [4Fe-4S] cluster site. Residue Y30 participates in S-adenosyl-L-methionine binding. [4Fe-4S] cluster is bound at residue C31. R68 is a binding site for GTP. Residue G72 coordinates S-adenosyl-L-methionine. T99 lines the GTP pocket. S123 contacts S-adenosyl-L-methionine. K160 contributes to the GTP binding site. S-adenosyl-L-methionine is bound at residue M194. Residues C257 and C260 each contribute to the [4Fe-4S] cluster site. A GTP-binding site is contributed by 262–264 (RLR). Position 274 (C274) interacts with [4Fe-4S] cluster.

It belongs to the radical SAM superfamily. MoaA family. As to quaternary structure, monomer and homodimer. [4Fe-4S] cluster is required as a cofactor.

The catalysed reaction is GTP + AH2 + S-adenosyl-L-methionine = (8S)-3',8-cyclo-7,8-dihydroguanosine 5'-triphosphate + 5'-deoxyadenosine + L-methionine + A + H(+). The protein operates within cofactor biosynthesis; molybdopterin biosynthesis. Functionally, catalyzes the cyclization of GTP to (8S)-3',8-cyclo-7,8-dihydroguanosine 5'-triphosphate. The chain is GTP 3',8-cyclase from Klebsiella pneumoniae (strain 342).